A 434-amino-acid polypeptide reads, in one-letter code: 26S proteasome regulatory subunit 6A (434 aa).

An N-acetylalanine modification is found at Ala-2. At Tyr-180 the chain carries Phosphotyrosine. Position 222-229 (222-229) interacts with ATP; that stretch reads GPPGTGKT.

It belongs to the AAA ATPase family. Post-translationally, N-acetylated by NAT1.

It is found in the cytoplasm. The protein localises to the nucleus. Functionally, the 26S proteasome is involved in the ATP-dependent degradation of ubiquitinated proteins. The regulatory (or ATPase) complex confers ATP dependency and substrate specificity to the 26S complex. The sequence is that of 26S proteasome regulatory subunit 6A (RPT5) from Saccharomyces cerevisiae (strain ATCC 204508 / S288c) (Baker's yeast).